A 282-amino-acid chain; its full sequence is Bifunctional protein FolD (282 aa).

NADP(+) contacts are provided by residues 165-167 (GRS), Ser-190, and Thr-231.

It belongs to the tetrahydrofolate dehydrogenase/cyclohydrolase family. As to quaternary structure, homodimer.

The enzyme catalyses (6R)-5,10-methylene-5,6,7,8-tetrahydrofolate + NADP(+) = (6R)-5,10-methenyltetrahydrofolate + NADPH. It catalyses the reaction (6R)-5,10-methenyltetrahydrofolate + H2O = (6R)-10-formyltetrahydrofolate + H(+). It functions in the pathway one-carbon metabolism; tetrahydrofolate interconversion. Its function is as follows. Catalyzes the oxidation of 5,10-methylenetetrahydrofolate to 5,10-methenyltetrahydrofolate and then the hydrolysis of 5,10-methenyltetrahydrofolate to 10-formyltetrahydrofolate. The sequence is that of Bifunctional protein FolD from Clostridium beijerinckii (strain ATCC 51743 / NCIMB 8052) (Clostridium acetobutylicum).